We begin with the raw amino-acid sequence, 173 residues long: ATP synthase subunit b (173 aa).

Residues 20–40 (IIATLAIFLVLMFLLKKVAWG) form a helical membrane-spanning segment.

The protein belongs to the ATPase B chain family. As to quaternary structure, F-type ATPases have 2 components, F(1) - the catalytic core - and F(0) - the membrane proton channel. F(1) has five subunits: alpha(3), beta(3), gamma(1), delta(1), epsilon(1). F(0) has three main subunits: a(1), b(2) and c(10-14). The alpha and beta chains form an alternating ring which encloses part of the gamma chain. F(1) is attached to F(0) by a central stalk formed by the gamma and epsilon chains, while a peripheral stalk is formed by the delta and b chains.

The protein resides in the cell membrane. Its function is as follows. F(1)F(0) ATP synthase produces ATP from ADP in the presence of a proton or sodium gradient. F-type ATPases consist of two structural domains, F(1) containing the extramembraneous catalytic core and F(0) containing the membrane proton channel, linked together by a central stalk and a peripheral stalk. During catalysis, ATP synthesis in the catalytic domain of F(1) is coupled via a rotary mechanism of the central stalk subunits to proton translocation. In terms of biological role, component of the F(0) channel, it forms part of the peripheral stalk, linking F(1) to F(0). In Lysinibacillus sphaericus (strain C3-41), this protein is ATP synthase subunit b.